The chain runs to 98 residues: Defensin (98 aa).

Cystine bridges form between Cys-61-Cys-88, Cys-74-Cys-94, and Cys-78-Cys-96.

The protein belongs to the invertebrate defensin family. Type 1 subfamily.

The protein is Defensin of Mamestra brassicae (Cabbage moth).